We begin with the raw amino-acid sequence, 613 residues long: 4-hydroxy-3-methylbut-2-en-1-yl diphosphate synthase (flavodoxin) (613 aa).

Cys521, Cys524, Cys555, and Glu562 together coordinate [4Fe-4S] cluster.

This sequence belongs to the IspG family. Requires [4Fe-4S] cluster as cofactor.

The catalysed reaction is (2E)-4-hydroxy-3-methylbut-2-enyl diphosphate + oxidized [flavodoxin] + H2O + 2 H(+) = 2-C-methyl-D-erythritol 2,4-cyclic diphosphate + reduced [flavodoxin]. The protein operates within isoprenoid biosynthesis; isopentenyl diphosphate biosynthesis via DXP pathway; isopentenyl diphosphate from 1-deoxy-D-xylulose 5-phosphate: step 5/6. Converts 2C-methyl-D-erythritol 2,4-cyclodiphosphate (ME-2,4cPP) into 1-hydroxy-2-methyl-2-(E)-butenyl 4-diphosphate. This chain is 4-hydroxy-3-methylbut-2-en-1-yl diphosphate synthase (flavodoxin), found in Bacteroides thetaiotaomicron (strain ATCC 29148 / DSM 2079 / JCM 5827 / CCUG 10774 / NCTC 10582 / VPI-5482 / E50).